The primary structure comprises 128 residues: uncharacterized protein (128 aa).

Helical transmembrane passes span 45 to 65 (GYFH…LFPF) and 95 to 115 (FMSH…LSCF).

Its subcellular location is the membrane. This is an uncharacterized protein from Saccharomyces cerevisiae (strain ATCC 204508 / S288c) (Baker's yeast).